We begin with the raw amino-acid sequence, 1220 residues long: Post-transcriptional regulator MKT1L (1220 aa).

Positions 1-107 (MRKAGANRNN…SPWNSPPQQT (107 aa)) are disordered. Residues 34 to 70 (PHHHQHQHHHQHQHQHQHQHQHPHQHPHQHHHHHPHH) show a composition bias toward basic residues.

Belongs to the XPG/RAD2 endonuclease family. As to quaternary structure, forms a complex composed of at least MKT1L, PBP1, XAC1 and LSM12.

The protein resides in the cytoplasm. Involved in post-transcriptional regulation of gene expression. This chain is Post-transcriptional regulator MKT1L, found in Trypanosoma brucei brucei (strain 927/4 GUTat10.1).